We begin with the raw amino-acid sequence, 461 residues long: Squalene synthase BSS (461 aa).

Residues Arg51 and Arg76 each contribute to the NADP(+) site. Asp79, Glu82, and Asp83 together coordinate Mg(2+). Residues Arg219, Lys322, and Arg324 each coordinate NADP(+). A helical membrane pass occupies residues 430–450 (VTQHWWSILIFLISIAVFFIP).

This sequence belongs to the phytoene/squalene synthase family. It depends on Mg(2+) as a cofactor.

Its subcellular location is the endoplasmic reticulum membrane. It catalyses the reaction 2 (2E,6E)-farnesyl diphosphate + NADPH + H(+) = squalene + 2 diphosphate + NADP(+). The enzyme catalyses 2 (2E,6E)-farnesyl diphosphate + NADH + H(+) = squalene + 2 diphosphate + NAD(+). Its function is as follows. Converts farnesyl diphosphate (FPP) into squalene, a precursor for sterol biosynthesis in eukaryotes. Does not possess botryococcene synthase activity. This is Squalene synthase BSS from Botryococcus braunii (Green alga).